A 364-amino-acid polypeptide reads, in one-letter code: Aminomethyltransferase (364 aa).

It belongs to the GcvT family. As to quaternary structure, the glycine cleavage system is composed of four proteins: P, T, L and H.

The enzyme catalyses N(6)-[(R)-S(8)-aminomethyldihydrolipoyl]-L-lysyl-[protein] + (6S)-5,6,7,8-tetrahydrofolate = N(6)-[(R)-dihydrolipoyl]-L-lysyl-[protein] + (6R)-5,10-methylene-5,6,7,8-tetrahydrofolate + NH4(+). In terms of biological role, the glycine cleavage system catalyzes the degradation of glycine. The chain is Aminomethyltransferase from Salmonella paratyphi A (strain AKU_12601).